The chain runs to 329 residues: Putative L-ascorbate peroxidase 6 (329 aa).

His123 serves as the catalytic Proton acceptor. His244 serves as a coordination point for heme b.

Belongs to the peroxidase family. Ascorbate peroxidase subfamily. It depends on heme b as a cofactor.

It carries out the reaction L-ascorbate + H2O2 = L-dehydroascorbate + 2 H2O. Functionally, plays a key role in hydrogen peroxide removal. This is Putative L-ascorbate peroxidase 6 (APX6) from Arabidopsis thaliana (Mouse-ear cress).